The chain runs to 700 residues: Elongation factor G (700 aa).

A tr-type G domain is found at 10-286; that stretch reads KKVRNIGIMA…AVIDYLPSPL (277 aa). GTP contacts are provided by residues 19-26, 83-87, and 137-140; these read AHIDAGKT, DTPGH, and NKMD.

It belongs to the TRAFAC class translation factor GTPase superfamily. Classic translation factor GTPase family. EF-G/EF-2 subfamily.

Its subcellular location is the cytoplasm. Functionally, catalyzes the GTP-dependent ribosomal translocation step during translation elongation. During this step, the ribosome changes from the pre-translocational (PRE) to the post-translocational (POST) state as the newly formed A-site-bound peptidyl-tRNA and P-site-bound deacylated tRNA move to the P and E sites, respectively. Catalyzes the coordinated movement of the two tRNA molecules, the mRNA and conformational changes in the ribosome. The polypeptide is Elongation factor G (Nocardia farcinica (strain IFM 10152)).